Here is a 240-residue protein sequence, read N- to C-terminus: ATP synthase subunit a (240 aa).

The next 5 membrane-spanning stretches (helical) occupy residues L21–F41, A83–I103, D116–V136, L184–I204, and L207–L227.

The protein belongs to the ATPase A chain family. F-type ATPases have 2 components, CF(1) - the catalytic core - and CF(0) - the membrane proton channel. CF(1) has five subunits: alpha(3), beta(3), gamma(1), delta(1), epsilon(1). CF(0) has three main subunits: a(1), b(2) and c(9-12). The alpha and beta chains form an alternating ring which encloses part of the gamma chain. CF(1) is attached to CF(0) by a central stalk formed by the gamma and epsilon chains, while a peripheral stalk is formed by the delta and b chains.

Its subcellular location is the cell membrane. In terms of biological role, key component of the proton channel; it plays a direct role in the translocation of protons across the membrane. The sequence is that of ATP synthase subunit a from Macrococcus caseolyticus (strain JCSC5402) (Macrococcoides caseolyticum).